We begin with the raw amino-acid sequence, 280 residues long: Phosphonates import ATP-binding protein PhnC (280 aa).

One can recognise an ABC transporter domain in the interval 2–245; it reads FELKNVTRRF…AVKEIYGTDK (244 aa). 34–41 is a binding site for ATP; sequence GRSGAGKS. A disordered region spans residues 257-280; it reads TSLESKRRAEDVSSGRVAKAAAVH. The segment covering 260–269 has biased composition (basic and acidic residues); sequence ESKRRAEDVS.

This sequence belongs to the ABC transporter superfamily. Phosphonates importer (TC 3.A.1.9.1) family. In terms of assembly, the complex is composed of two ATP-binding proteins (PhnC), two transmembrane proteins (PhnE) and a solute-binding protein (PhnD).

The protein resides in the cell inner membrane. The enzyme catalyses phosphonate(out) + ATP + H2O = phosphonate(in) + ADP + phosphate + H(+). In terms of biological role, part of the ABC transporter complex PhnCDE involved in phosphonates import. Responsible for energy coupling to the transport system. This is Phosphonates import ATP-binding protein PhnC from Rhizobium johnstonii (strain DSM 114642 / LMG 32736 / 3841) (Rhizobium leguminosarum bv. viciae).